The sequence spans 69 residues: Putative defensin-like protein 312 (69 aa).

An N-terminal signal peptide occupies residues 1-19; that stretch reads MSCFSFLVYFLLFIVTKMS. The cysteines at positions 45 and 57 are disulfide-linked.

This sequence belongs to the DEFL family.

It is found in the secreted. The protein is Putative defensin-like protein 312 of Arabidopsis thaliana (Mouse-ear cress).